Consider the following 198-residue polypeptide: Large ribosomal subunit protein bL27c (198 aa).

A chloroplast-targeting transit peptide spans 1–58 (MAMATSMSLNLIGAFKGLSLSSTSSFLRGDLSFSPKTSFTVTLPLENLQAPIPLTIES).

Belongs to the bacterial ribosomal protein bL27 family. In terms of assembly, part of the 50S ribosomal subunit.

It is found in the plastid. The protein localises to the chloroplast. The polypeptide is Large ribosomal subunit protein bL27c (RPL27) (Arabidopsis thaliana (Mouse-ear cress)).